The following is a 156-amino-acid chain: uncharacterized protein (156 aa).

This is an uncharacterized protein from Acheta domesticus (House cricket).